Consider the following 334-residue polypeptide: Cytoskeleton protein RodZ (334 aa).

Over 1 to 111 (MNTEATHDQN…LGKRRKKRDG (111 aa)) the chain is Cytoplasmic. Residues 19–71 (LRNAREQLGLSQQAVAERLCLKVSTVRDIEEDKAPSDLASTFLRGYIRSYARL) form the HTH cro/C1-type domain. A DNA-binding region (H-T-H motif) is located at residues 30–49 (QQAVAERLCLKVSTVRDIEE). The chain crosses the membrane as a helical; Signal-anchor for type II membrane protein span at residues 112 to 132 (WLMSFTWLVLFVVVGLTGAWW). Over 133–334 (WQNHKAQQEE…TLNAEPTPAQ (202 aa)) the chain is Periplasmic. Disordered regions lie at residues 155–207 (NADK…ATQN) and 221–241 (ATSAAPAATETPSALPTSQAG). Positions 176–207 (TTPAQTAPAPATPVDSTAATQTPAATATATQN) are enriched in low complexity.

It belongs to the RodZ family.

It is found in the cell inner membrane. In terms of biological role, cytoskeletal protein that is involved in cell-shape control through regulation of the length of the long axis. This is Cytoskeleton protein RodZ from Salmonella schwarzengrund (strain CVM19633).